A 154-amino-acid polypeptide reads, in one-letter code: Large ribosomal subunit protein uL15 (154 aa).

Positions M1–L57 are disordered. Gly residues predominate over residues I23 to M35.

It belongs to the universal ribosomal protein uL15 family. As to quaternary structure, part of the 50S ribosomal subunit.

Functionally, binds to the 23S rRNA. In Thermosynechococcus vestitus (strain NIES-2133 / IAM M-273 / BP-1), this protein is Large ribosomal subunit protein uL15.